An 874-amino-acid chain; its full sequence is MYQTTAALRSAFLEFFRSNGHQVVDSSSLVPGNDPTLLFTNAGMNQFKDVFLGMDKRSYTRATTAQRCVRAGGKHNDLDNVGYTARHHTFFEMLGNFSFGDYFKEDAIRFGWTFLTEVLKLPKERLCVTVYQTDDEAFEIWNKKIGVAAENIIRIGDNKGAPYASDNFWQMGDTGPCGPCTEIFYDHGDHIWGGRPGSPEEDGDRFIEIWNIVFMQYNRQASGEMLPLPKPSVDTGMGIERIAAIMQGVHSNYEIDIFRALIAKAAEIIGVTDLSNKSLRVIADHIRSCAFLVADGVMPSNEGRGYVLRRIIRRAVRHGNKLGATEAFFYKLVPTLIEVMGDAAKGLADTQVIVEKALKAEEEQFARTLERGLGILDSALNELQGDTLDGETVFKLYDTYGFPVDLTADVCRERNIIVDEAGFEVAMAEQRSRAQAAGNFGADYNAALKIDAETAFCGYSELTGNAKVTALYLNGESVSAISAGDDAVVVLDVTPFYAESGGQVGDKGVLVAQGIEFAVSDTQKFGQASGHKGTLTAGSLSVGQVLEAKVDKKLRHRTQLNHSVTHLLHAALRQVLGTHVTQKGSLVDPERLRFDFSHFEAVKPAELKQVEELVNTQIRRNHELKVAEMAIDEAKEKGAMALFGEKYDAQVRVVTMGDFSIELCGGTHVGRTGDIGLFKITSEGGIAAGVRRIEAVTGAAAMAYVAQQQAQLEEAAALLKGDTQSVVAKLKAQLDKMKQLEKDMQQLKDKLAAAASADLAGDAVVVNGVNVLIKKLEGVEAGALRGLQDELKQKLKSAVILLGVAQEGKVNLIAGVSNDLVGKVKAGELVAMVAAQVGGKGGGRPDMAQAGGSQPENLDAALSQVLPWITERLA.

Residues His-562, His-566, Cys-664, and His-668 each coordinate Zn(2+).

Belongs to the class-II aminoacyl-tRNA synthetase family. Zn(2+) is required as a cofactor.

It localises to the cytoplasm. It carries out the reaction tRNA(Ala) + L-alanine + ATP = L-alanyl-tRNA(Ala) + AMP + diphosphate. Functionally, catalyzes the attachment of alanine to tRNA(Ala) in a two-step reaction: alanine is first activated by ATP to form Ala-AMP and then transferred to the acceptor end of tRNA(Ala). Also edits incorrectly charged Ser-tRNA(Ala) and Gly-tRNA(Ala) via its editing domain. The protein is Alanine--tRNA ligase of Shewanella sp. (strain ANA-3).